A 92-amino-acid chain; its full sequence is Large ribosomal subunit protein bL25 (92 aa).

This sequence belongs to the bacterial ribosomal protein bL25 family. In terms of assembly, part of the 50S ribosomal subunit; part of the 5S rRNA/L5/L18/L25 subcomplex. Contacts the 5S rRNA. Binds to the 5S rRNA independently of L5 and L18.

Its function is as follows. This is one of the proteins that binds to the 5S RNA in the ribosome where it forms part of the central protuberance. This chain is Large ribosomal subunit protein bL25, found in Photobacterium damsela subsp. piscicida (Pasteurella piscicida).